Consider the following 726-residue polypeptide: Methyltransferase FGSG_00040 (726 aa).

TPR repeat units lie at residues 187 to 220, 224 to 257, and 258 to 291; these read SSDI…GQNV, QLAF…AMPS, and EKSL…YPEN. The SET domain maps to 336-531; it reads APVEIRESPG…AKTEIFFCYR (196 aa). S-adenosyl-L-methionine is bound at residue Tyr530.

The protein belongs to the class V-like SAM-binding methyltransferase superfamily.

It functions in the pathway mycotoxin biosynthesis. In terms of biological role, methyltransferase; part of the gene cluster that mediates the biosynthesis of gramillins A and B, bicyclic lipopeptides that induce cell death in maize leaves but not in wheat leaves. The nonribosomal peptide synthetase GRA1 incorporates respectively a glutamic adic (Glu), a leucine (Leu), a serine (Ser), a hydroxyglutamine (HOGln), a 2-amino decanoic acid, and 2 cysteins (CysB and CysA). The biosynthesis of 2-amino decanoic acid incorporated in gramillins could be initiated by a fatty acid synthase composed of the alpha and beta subunits FGSG_00036 and FGSG_11656. The cytochrome P450 monooxygenase FGSG_15680 could hydroxylate the fatty acid chain. Subsequent oxidation to the ketone by the oxidoreductase FGSG_00048 and transamination by aminotransferase FGSG_00049 could form 2-amino-decanoic acid. On the other hand, FGSG_15680 could also be responsible for the HO-modified glutamine at the gamma-position. Whether hydroxylation occurs on the fully assembled product or on the Gln residue prior to assembly into the gramillins requires further proof. The thioredoxin FGSG_00043 could also be required for the disulfide-bond formation between CysA and CysB. The specific involvement of the remaining proteins from the cluster is more difficult to discern, but could have broader regulatory (FGSG_00040 and FGSG_11657) or enzymatic functions (FGSG_00044 and FGSG_00045). The final C-domain of GRA1 does not possess the expected sequence of a termination CT domain, often implicated in macrocyclization and release of a cyclopeptidein fungal NRPs; and the thioesterase FGSG_00047 may act in concert with the terminal C-domain of GRA1 to catalyze the formation of the macrocyclic anhydride and release of the products. In Gibberella zeae (strain ATCC MYA-4620 / CBS 123657 / FGSC 9075 / NRRL 31084 / PH-1) (Wheat head blight fungus), this protein is Methyltransferase FGSG_00040.